The sequence spans 176 residues: Macro domain-containing protein LMOf2365_2748 (176 aa).

Positions 1-175 (MEITVVKGDI…LYNKLINSEV (175 aa)) constitute a Macro domain.

This sequence belongs to the MacroD-type family.

This Listeria monocytogenes serotype 4b (strain F2365) protein is Macro domain-containing protein LMOf2365_2748.